A 144-amino-acid polypeptide reads, in one-letter code: Large ribosomal subunit protein uL16c (144 aa).

The protein belongs to the universal ribosomal protein uL16 family. In terms of assembly, part of the 50S ribosomal subunit.

Its subcellular location is the plastid. The protein resides in the chloroplast. The chain is Large ribosomal subunit protein uL16c from Chara vulgaris (Common stonewort).